The sequence spans 348 residues: Glycerol-1-phosphate dehydrogenase [NAD(P)+] (348 aa).

Residues 94–98 and 116–119 each bind NAD(+); these read GKVID and TTAS. Residue aspartate 121 coordinates substrate. Serine 125 serves as a coordination point for NAD(+). Aspartate 168 contributes to the substrate binding site. Residues aspartate 168 and histidine 248 each contribute to the Zn(2+) site. Residue histidine 252 participates in substrate binding. Histidine 264 lines the Zn(2+) pocket.

The protein belongs to the glycerol-1-phosphate dehydrogenase family. As to quaternary structure, homooctamer. Zn(2+) serves as cofactor.

The protein resides in the cytoplasm. It carries out the reaction sn-glycerol 1-phosphate + NAD(+) = dihydroxyacetone phosphate + NADH + H(+). It catalyses the reaction sn-glycerol 1-phosphate + NADP(+) = dihydroxyacetone phosphate + NADPH + H(+). It functions in the pathway membrane lipid metabolism; glycerophospholipid metabolism. Functionally, catalyzes the NAD(P)H-dependent reduction of dihydroxyacetonephosphate (DHAP or glycerone phosphate) to glycerol 1-phosphate (G1P). The G1P thus generated is used as the glycerophosphate backbone of phospholipids in the cellular membranes of Archaea. The polypeptide is Glycerol-1-phosphate dehydrogenase [NAD(P)+] (Methanobrevibacter smithii (strain ATCC 35061 / DSM 861 / OCM 144 / PS)).